A 500-amino-acid chain; its full sequence is Flt3-interacting zinc finger protein 1 (500 aa).

Position 1 is an N-acetylmethionine (methionine 1). The interval 1-24 (MEDSSLPVVPAPIAAPGPAPSATA) is disordered. A compositionally biased stretch (pro residues) spans 9 to 19 (VPAPIAAPGPA). 6 C2H2-type zinc fingers span residues 29–51 (FHCSECGKSFRYRSDLRRHFARH), 57–79 (HACPRCGKGFKHSFNLANHLRSH), 85–107 (YRCSACPKGFRDSTGLLHHQVVH), 113–136 (YCCLVCELRFSSRSSLGRHLKRQH), 204–226 (FACGACARRFDHGRELAAHWAAH), and 232–254 (FKCPRCERDFNAPALLERHKLTH). 2 disordered regions span residues 255–284 (DLQGSNAPPTQVWASGGGPEVAGEGDASEV) and 306–328 (KLEALLPGDEGSGNDQAPAAAAE). Polar residues predominate over residues 256–267 (LQGSNAPPTQVW). 5 consecutive C2H2-type zinc fingers follow at residues 336-357 (YQCDCGTFFASAPALASHLEAH), 363-386 (YGCGHCGALYAALAALEEHRRASH), 418-440 (FGCSECEKLFRSPRDLERHVLVH), 446-468 (FPCLECGKFFRHECYLKRHRLLH), and 474-496 (FPCHICGKGFITLSNLSRHLKLH). Residues 383-415 (RASHGEGSGEAAPDGEGNQAAGGPGPGSSSRSK) are disordered.

In terms of assembly, interacts with FLT3 cytoplasmic catalytic domain, following receptor stimulation, in a kinase-independent manner. Does not interact with other structurally related receptor tyrosine kinases, including KIT, CSF1R and PDGFR. Interacts with NRL. As to expression, widely expressed. In the retina, highest expression in the ganglion cell layer.

It is found in the cytoplasm. The protein localises to the nucleus. Its function is as follows. May be a transcriptional repressor of NRL function in photoreceptors. Does not repress CRX-mediated transactivation. The chain is Flt3-interacting zinc finger protein 1 (Fiz1) from Mus musculus (Mouse).